Here is a 399-residue protein sequence, read N- to C-terminus: ATP phosphoribosyltransferase regulatory subunit (399 aa).

Belongs to the class-II aminoacyl-tRNA synthetase family. HisZ subfamily. In terms of assembly, heteromultimer composed of HisG and HisZ subunits.

It is found in the cytoplasm. It participates in amino-acid biosynthesis; L-histidine biosynthesis; L-histidine from 5-phospho-alpha-D-ribose 1-diphosphate: step 1/9. Functionally, required for the first step of histidine biosynthesis. May allow the feedback regulation of ATP phosphoribosyltransferase activity by histidine. The polypeptide is ATP phosphoribosyltransferase regulatory subunit (Symbiobacterium thermophilum (strain DSM 24528 / JCM 14929 / IAM 14863 / T)).